The primary structure comprises 147 residues: Hemoglobin subunit beta (147 aa).

V2 is subject to N-acetylvaline. The region spanning 3–147 (HLSGEEKSAV…VANALAHKYH (145 aa)) is the Globin domain. T13 bears the Phosphothreonine mark. Phosphoserine is present on S45. K60 carries the N6-acetyllysine modification. H64 contributes to the heme b binding site. K83 carries the N6-acetyllysine modification. H93 is a binding site for heme b. At C94 the chain carries S-nitrosocysteine. At K145 the chain carries N6-acetyllysine.

The protein belongs to the globin family. As to quaternary structure, heterotetramer of two alpha chains and two beta chains. In terms of tissue distribution, red blood cells.

In terms of biological role, involved in oxygen transport from the lung to the various peripheral tissues. This chain is Hemoglobin subunit beta (HBB), found in Lepus europaeus (European hare).